The chain runs to 287 residues: Pantothenate synthetase (287 aa).

ATP is bound at residue 37–44 (MGALHEGH). H44 serves as the catalytic Proton donor. Q68 contributes to the (R)-pantoate binding site. Position 68 (Q68) interacts with beta-alanine. ATP is bound at residue 154–157 (GQKD). Residue Q160 coordinates (R)-pantoate. ATP-binding positions include V183 and 191–194 (LSSR).

This sequence belongs to the pantothenate synthetase family. Homodimer.

The protein localises to the cytoplasm. It carries out the reaction (R)-pantoate + beta-alanine + ATP = (R)-pantothenate + AMP + diphosphate + H(+). It functions in the pathway cofactor biosynthesis; (R)-pantothenate biosynthesis; (R)-pantothenate from (R)-pantoate and beta-alanine: step 1/1. Its function is as follows. Catalyzes the condensation of pantoate with beta-alanine in an ATP-dependent reaction via a pantoyl-adenylate intermediate. The polypeptide is Pantothenate synthetase (Leifsonia xyli subsp. xyli (strain CTCB07)).